Here is an 885-residue protein sequence, read N- to C-terminus: Protein kintoun (885 aa).

6 disordered regions span residues 208 to 235 (LSKN…ADAG), 371 to 390 (LSRE…PVED), 607 to 636 (ELQQ…ESAC), 644 to 663 (EHHE…QRSY), 781 to 806 (RRLS…QPAH), and 819 to 871 (NNNH…MMFE). Residues 213–232 (TAEEKEPHPLEHMYPKKPEA) are compositionally biased toward basic and acidic residues. Ser376 carries the post-translational modification Phosphoserine. The span at 612–629 (HHQKKLNKKQRKRNKKQR) shows a compositional bias: basic residues. Position 784 is a phosphoserine (Ser784). The segment covering 824–837 (HVKDNKKQSLHDSG) has biased composition (basic and acidic residues). Residues 842–855 (NGSINNKNNHSNEN) are compositionally biased toward low complexity.

Belongs to the PIH1 family. Kintoun subfamily. As to quaternary structure, interacts with Pp1alpha-96A, Pp1-87B, Pp1-13C and flw.

It localises to the cytoplasm. Functionally, required for cytoplasmic pre-assembly of axonemal dyneins, thereby playing a central role in motility in cilia and flagella. Involved in pre-assembly of dynein arm complexes in the cytoplasm before intraflagellar transport loads them for the ciliary compartment. The sequence is that of Protein kintoun from Drosophila mojavensis (Fruit fly).